We begin with the raw amino-acid sequence, 493 residues long: Malonyl-CoA decarboxylase, mitochondrial (493 aa).

The transit peptide at 1–39 (MRGFGPGLTARRLLPLRLPPRPPGPRLASGQAAGALERA) directs the protein to the mitochondrion. The segment at 40 to 190 (MDELLRRAVP…VLKGMLSEWF (151 aa)) is alpha-helical domain. Residue Lys59 is modified to N6-acetyllysine. An N6-acetyllysine; alternate modification is found at Lys168. The residue at position 168 (Lys168) is an N6-succinyllysine; alternate. The segment at 191 to 493 (SSGFLNLERV…VAQFQKNSKL (303 aa)) is catalytic domain. N6-acetyllysine is present on Lys211. Lys222 carries the N6-succinyllysine modification. Residues 299 to 305 (QGVELGT) and Ser329 contribute to the malonyl-CoA site. Catalysis depends on Ser329, which acts as the Proton acceptor. Position 389 is an N6-acetyllysine (Lys389). His423 lines the malonyl-CoA pocket. His423 serves as the catalytic Proton donor. Position 472 is an N6-acetyllysine (Lys472). A Microbody targeting signal motif is present at residues 491-493 (SKL).

Homotetramer. Dimer of dimers. The two subunits within a dimer display conformational differences suggesting that at any given moment, only one of the two subunits is competent for malonyl-CoA binding and catalytic activity. Under oxidizing conditions, can form disulfide-linked homotetramers (in vitro). Associates with the peroxisomal targeting signal receptor PEX5. In terms of processing, acetylation at Lys-472 activates malonyl-CoA decarboxylase activity. Deacetylation at Lys-472 by SIRT4 represses activity, leading to promote lipogenesis. Post-translationally, interchain disulfide bonds may form in peroxisomes (Potential). Interchain disulfide bonds are not expected to form in the reducing environment of the cytoplasm and mitochondria. As to expression, expressed in fibroblasts and hepatoblastoma cells (at protein level). Expressed strongly in heart, liver, skeletal muscle, kidney and pancreas. Expressed in myotubes. Expressed weakly in brain, placenta, spleen, thymus, testis, ovary and small intestine.

The protein localises to the cytoplasm. Its subcellular location is the mitochondrion matrix. The protein resides in the peroxisome. It localises to the peroxisome matrix. The catalysed reaction is malonyl-CoA + H(+) = acetyl-CoA + CO2. It functions in the pathway metabolic intermediate biosynthesis; acetyl-CoA biosynthesis; acetyl-CoA from malonyl-CoA: step 1/1. With respect to regulation, malonyl-CoA decarboxylase activity does not require any cofactors or divalent metal ions. Formation of interchain disulfide bonds leads to positive cooperativity between active sites and increases the affinity for malonyl-CoA and the catalytic efficiency (in vitro). Its function is as follows. Catalyzes the conversion of malonyl-CoA to acetyl-CoA. In the fatty acid biosynthesis MCD selectively removes malonyl-CoA and thus assures that methyl-malonyl-CoA is the only chain elongating substrate for fatty acid synthase and that fatty acids with multiple methyl side chains are produced. In peroxisomes it may be involved in degrading intraperoxisomal malonyl-CoA, which is generated by the peroxisomal beta-oxidation of odd chain-length dicarboxylic fatty acids. Plays a role in the metabolic balance between glucose and lipid oxidation in muscle independent of alterations in insulin signaling. May play a role in controlling the extent of ischemic injury by promoting glucose oxidation. In Homo sapiens (Human), this protein is Malonyl-CoA decarboxylase, mitochondrial.